A 22-amino-acid polypeptide reads, in one-letter code: Lantibiotic mutacin B-Ny266 (22 aa).

A cross-link (lanthionine (Ser-Cys)) is located at residues serine 3 to cysteine 7. Residue serine 5 is modified to 2,3-didehydroalanine (Ser). Positions threonine 8 to cysteine 11 form a cross-link, beta-methyllanthionine (Thr-Cys). Threonine 14 carries the 2,3-didehydrobutyrine modification. The lanthionine (Ser-Cys) cross-link spans serine 16–cysteine 21. Positions serine 19–cysteine 22 form a cross-link, S-(2-aminovinyl)-D-cysteine (Ser-Cys).

Post-translationally, maturation of lantibiotics involves the enzymatic conversion of Thr, and Ser into dehydrated AA and the formation of thioether bonds with cysteine. The C-terminal lanthionine undergoes decarboxylation. This is followed by membrane translocation and cleavage of the modified precursor. In terms of processing, it is not established whether the 2,3-didehydrobutyrine is the E- or Z-isomer.

Its function is as follows. Lanthionine-containing peptide antibiotic (lantibiotic) active on Gram-positive bacteria. The bactericidal activity of lantibiotics is based on depolarization of energized bacterial cytoplasmic membranes, initiated by the formation of aqueous transmembrane pores. The polypeptide is Lantibiotic mutacin B-Ny266 (Streptococcus mutans).